Reading from the N-terminus, the 290-residue chain is Appressorium protein ROW2 (290 aa).

Residues 1–19 (MFTKSVFIALVAGVLGVTA) form the signal peptide. Residues 266–290 (AIKTPSKRSVMATHVKRSPEWEEEP) form a disordered region.

The protein localises to the secreted. It is found in the nucleus. Functionally, plays a role in the formation of the appressorium, a specialized infection structure with the purpose of penetrating the host surface, and is required for proper remodeling of the appressorium wall and vesicle secretion. This Mycosarcoma maydis (Corn smut fungus) protein is Appressorium protein ROW2.